Reading from the N-terminus, the 540-residue chain is Protein SOSEKI 3 (540 aa).

The tract at residues K32–D123 is DIX-like oligomerization domain. 2 disordered regions span residues E147 to N201 and A219 to G294. Composition is skewed to low complexity over residues S150–M163 and R185–P194. Polar residues predominate over residues A221 to V244. Residues T246 to T256 show a composition bias toward acidic residues. Residues N280 to S292 are compositionally biased toward low complexity. An Association to cell membranes motif is present at residues C342–G343. The disordered stretch occupies residues K412–H492. Residues S418–M437 show a composition bias toward polar residues. Residues S471 to T482 show a composition bias toward basic and acidic residues.

The protein belongs to the SOSEKI family. As to quaternary structure, homodimer. Forms long polymer filaments with other SOKs proteins polymers (e.g. SOK1, SOK2, SOK3 and SOK4) crucial for polar localization and biological activity. Binds to ANGUSTIFOLIA (AN). As to expression, expressed during embryogenesis and in roots.

Its subcellular location is the cell membrane. Functionally, SOSEKI proteins (SOK1-5) locally interpret global polarity cues and can influence cell division orientation to coordinate cell polarization relative to body axes, probably by guiding ANGUSTIFOLIA (AN) polarized localization. The protein is Protein SOSEKI 3 of Arabidopsis thaliana (Mouse-ear cress).